The chain runs to 407 residues: tRNA pseudouridine synthase Pus10 (407 aa).

The Nucleophile role is filled by Asp232. The substrate site is built by Tyr300 and Tyr369.

The protein belongs to the pseudouridine synthase Pus10 family.

It catalyses the reaction uridine(54) in tRNA = pseudouridine(54) in tRNA. The catalysed reaction is uridine(55) in tRNA = pseudouridine(55) in tRNA. Responsible for synthesis of pseudouridine from uracil-54 and uracil-55 in the psi GC loop of transfer RNAs. This is tRNA pseudouridine synthase Pus10 from Methanosphaera stadtmanae (strain ATCC 43021 / DSM 3091 / JCM 11832 / MCB-3).